Reading from the N-terminus, the 81-residue chain is Costars family protein ABRACL (81 aa).

The protein belongs to the costars family.

The protein is Costars family protein ABRACL (abracl) of Xenopus tropicalis (Western clawed frog).